Consider the following 319-residue polypeptide: Methionyl-tRNA formyltransferase (319 aa).

Residue 116–119 (SLLP) participates in (6S)-5,6,7,8-tetrahydrofolate binding.

Belongs to the Fmt family.

It carries out the reaction L-methionyl-tRNA(fMet) + (6R)-10-formyltetrahydrofolate = N-formyl-L-methionyl-tRNA(fMet) + (6S)-5,6,7,8-tetrahydrofolate + H(+). Its function is as follows. Attaches a formyl group to the free amino group of methionyl-tRNA(fMet). The formyl group appears to play a dual role in the initiator identity of N-formylmethionyl-tRNA by promoting its recognition by IF2 and preventing the misappropriation of this tRNA by the elongation apparatus. The protein is Methionyl-tRNA formyltransferase of Treponema pallidum (strain Nichols).